Reading from the N-terminus, the 306-residue chain is Porphobilinogen deaminase (306 aa).

Position 237 is an S-(dipyrrolylmethanemethyl)cysteine (Cys-237).

This sequence belongs to the HMBS family. Monomer. Requires dipyrromethane as cofactor.

It carries out the reaction 4 porphobilinogen + H2O = hydroxymethylbilane + 4 NH4(+). Its pathway is porphyrin-containing compound metabolism; protoporphyrin-IX biosynthesis; coproporphyrinogen-III from 5-aminolevulinate: step 2/4. Functionally, tetrapolymerization of the monopyrrole PBG into the hydroxymethylbilane pre-uroporphyrinogen in several discrete steps. This chain is Porphobilinogen deaminase, found in Syntrophus aciditrophicus (strain SB).